Reading from the N-terminus, the 436-residue chain is uncharacterized protein (436 aa).

A signal peptide spans 1–18 (MMKRFVALSMAIFSLSFA).

This is an uncharacterized protein from Aquifex aeolicus (strain VF5).